A 301-amino-acid chain; its full sequence is NAD kinase 2 (301 aa).

The active-site Proton acceptor is D77. Residues 77 to 78 (DG), R82, 151 to 152 (NE), K162, D181, and 192 to 197 (TAYAFS) contribute to the NAD(+) site.

This sequence belongs to the NAD kinase family. A divalent metal cation serves as cofactor.

The protein localises to the cytoplasm. It carries out the reaction NAD(+) + ATP = ADP + NADP(+) + H(+). Involved in the regulation of the intracellular balance of NAD and NADP, and is a key enzyme in the biosynthesis of NADP. Catalyzes specifically the phosphorylation on 2'-hydroxyl of the adenosine moiety of NAD to yield NADP. This is NAD kinase 2 from Streptomyces coelicolor (strain ATCC BAA-471 / A3(2) / M145).